The primary structure comprises 427 residues: 3-phosphoshikimate 1-carboxyvinyltransferase (427 aa).

Positions 20, 21, and 25 each coordinate 3-phosphoshikimate. Lys-20 is a binding site for phosphoenolpyruvate. Gly-92 and Arg-120 together coordinate phosphoenolpyruvate. Ser-166, Gln-168, Asp-312, and Lys-339 together coordinate 3-phosphoshikimate. Residue Gln-168 coordinates phosphoenolpyruvate. Asp-312 serves as the catalytic Proton acceptor. Phosphoenolpyruvate contacts are provided by Arg-343 and Arg-385.

This sequence belongs to the EPSP synthase family. Monomer.

It localises to the cytoplasm. The catalysed reaction is 3-phosphoshikimate + phosphoenolpyruvate = 5-O-(1-carboxyvinyl)-3-phosphoshikimate + phosphate. The protein operates within metabolic intermediate biosynthesis; chorismate biosynthesis; chorismate from D-erythrose 4-phosphate and phosphoenolpyruvate: step 6/7. Functionally, catalyzes the transfer of the enolpyruvyl moiety of phosphoenolpyruvate (PEP) to the 5-hydroxyl of shikimate-3-phosphate (S3P) to produce enolpyruvyl shikimate-3-phosphate and inorganic phosphate. In Streptococcus pyogenes serotype M4 (strain MGAS10750), this protein is 3-phosphoshikimate 1-carboxyvinyltransferase.